A 589-amino-acid polypeptide reads, in one-letter code: UvrABC system protein C (589 aa).

Positions 13–90 (PNPGCYLFKN…IKTHTPKYNF (78 aa)) constitute a GIY-YIG domain. The region spanning 194–229 (KDILKKLHHLMQKASEKMFYEKAQEYRDIIDSIKQT) is the UVR domain.

It belongs to the UvrC family. Interacts with UvrB in an incision complex.

It is found in the cytoplasm. In terms of biological role, the UvrABC repair system catalyzes the recognition and processing of DNA lesions. UvrC both incises the 5' and 3' sides of the lesion. The N-terminal half is responsible for the 3' incision and the C-terminal half is responsible for the 5' incision. The chain is UvrABC system protein C from Aster yellows witches'-broom phytoplasma (strain AYWB).